A 110-amino-acid chain; its full sequence is MDKNILAIIFVAVGTYLIRYIPIHLHSKIKNIDEKVKEINEILIYSSTSVISALFITSFIKFPIIFSNVLISTISLIFAIVSYKKWNNLGISILISVVIYYLASKFLISI.

A run of 3 helical transmembrane segments spans residues 5 to 25 (ILAI…PIHL), 62 to 82 (FPII…AIVS), and 90 to 110 (GISI…LISI).

It to A.fulgidus AF1754.

Its subcellular location is the cell membrane. This is an uncharacterized protein from Methanocaldococcus jannaschii (strain ATCC 43067 / DSM 2661 / JAL-1 / JCM 10045 / NBRC 100440) (Methanococcus jannaschii).